A 667-amino-acid polypeptide reads, in one-letter code: Probable potassium transport system protein Kup (667 aa).

Transmembrane regions (helical) follow at residues 16–36 (GFII…LYTM), 58–78 (VSLI…LIAL), 101–121 (WLII…ALTP), 146–166 (TNVI…QRFG), 167–187 (TGVI…VLGI), 221–241 (IFIL…YSDL), 253–273 (WPFV…WILA), 294–314 (VYLV…LISG), 343–363 (LYIP…VLYF), 373–393 (YGLA…YYLI), 399–419 (PLLA…FFLA), and 431–451 (VVVL…GTVI).

This sequence belongs to the HAK/KUP transporter (TC 2.A.72) family.

The protein resides in the cell membrane. The catalysed reaction is K(+)(in) + H(+)(in) = K(+)(out) + H(+)(out). In terms of biological role, transport of potassium into the cell. Likely operates as a K(+):H(+) symporter. This is Probable potassium transport system protein Kup from Streptococcus equi subsp. zooepidemicus (strain MGCS10565).